Reading from the N-terminus, the 377-residue chain is Succinyl-diaminopimelate desuccinylase (377 aa).

His-67 lines the Zn(2+) pocket. Asp-69 is an active-site residue. Asp-100 contacts Zn(2+). Glu-134 serves as the catalytic Proton acceptor. Positions 135, 163, and 349 each coordinate Zn(2+).

Belongs to the peptidase M20A family. DapE subfamily. In terms of assembly, homodimer. Zn(2+) is required as a cofactor. Co(2+) serves as cofactor.

The catalysed reaction is N-succinyl-(2S,6S)-2,6-diaminopimelate + H2O = (2S,6S)-2,6-diaminopimelate + succinate. Its pathway is amino-acid biosynthesis; L-lysine biosynthesis via DAP pathway; LL-2,6-diaminopimelate from (S)-tetrahydrodipicolinate (succinylase route): step 3/3. Catalyzes the hydrolysis of N-succinyl-L,L-diaminopimelic acid (SDAP), forming succinate and LL-2,6-diaminopimelate (DAP), an intermediate involved in the bacterial biosynthesis of lysine and meso-diaminopimelic acid, an essential component of bacterial cell walls. The chain is Succinyl-diaminopimelate desuccinylase from Actinobacillus pleuropneumoniae serotype 3 (strain JL03).